We begin with the raw amino-acid sequence, 257 residues long: Zinc transporter ZupT (257 aa).

Helical transmembrane passes span 5–25 (LILTILAGAATFIGAFLGVLG), 32–52 (LLAFSLGFAAGIMLLISLMEM), 61–81 (GMSPVLGYGMFIFGLLGYLGL), 109–129 (AILLTLGISLHNFPEGIATFV), 137–157 (LGFGIALAVALHNIPEGLAVV), 171–191 (ILWAGISGLAEILGGVLAWLI), 195–215 (MISPVVMAAIMAAVAGIMVAL), and 236–256 (GVLCGMSVMGFSLVLLQTAGI). The Fe(2+) site is built by Asn-120 and Glu-123. Zn(2+)-binding residues include Glu-123 and His-148. Residues Asn-149, Glu-152, and Glu-181 each coordinate Fe(2+). Glu-152 serves as a coordination point for Zn(2+).

It belongs to the ZIP transporter (TC 2.A.5) family. ZupT subfamily.

It is found in the cell inner membrane. It carries out the reaction Zn(2+)(in) = Zn(2+)(out). In terms of biological role, mediates zinc uptake. May also transport other divalent cations. This chain is Zinc transporter ZupT, found in Shigella dysenteriae serotype 1 (strain Sd197).